The following is a 162-amino-acid chain: L-amino acid N-acetyltransferase AaaT (162 aa).

The region spanning 4–162 (IVIRHAETRD…VDAYYMARVK (159 aa)) is the N-acetyltransferase domain.

Belongs to the acetyltransferase family.

The enzyme catalyses L-phenylalanine + acetyl-CoA = N-acetyl-L-phenylalanine + CoA + H(+). It catalyses the reaction L-methionine + acetyl-CoA = N-acetyl-L-methionine + CoA + H(+). Functionally, catalyzes the N-acetylation of L-phenylalanine and L-methionine using acetyl-CoA as acetyl donor in vitro. Cannot accept L-tyrosine as substrate and propionyl-CoA, succinyl-CoA or (S)-methylmalonyl-CoA as acyl donors. Is also able to acetylate and thus detoxify several nonhydrolyzable aminoacyl adenylates, but not the processed form of the peptide-nucleotide antibiotic microcin C (McC). When overproduced, provides complete resistance to leucyl sulfamoyl adenylate (LSA) and partial resistance to alanyl sulfamoyl adenylate (ASA) and phenylalanyl sulfamoyl adenylate (FSA). Therefore, may protect bacteria from various toxic aminoacyl nucleotides, either exogenous or those generated inside the cell during normal metabolism. The chain is L-amino acid N-acetyltransferase AaaT from Escherichia coli (strain K12).